The primary structure comprises 238 residues: 6-phosphogluconolactonase (238 aa).

This sequence belongs to the glucosamine/galactosamine-6-phosphate isomerase family. 6-phosphogluconolactonase subfamily.

The enzyme catalyses 6-phospho-D-glucono-1,5-lactone + H2O = 6-phospho-D-gluconate + H(+). Its pathway is carbohydrate degradation; pentose phosphate pathway; D-ribulose 5-phosphate from D-glucose 6-phosphate (oxidative stage): step 2/3. Hydrolysis of 6-phosphogluconolactone to 6-phosphogluconate. The polypeptide is 6-phosphogluconolactonase (pgl) (Pseudomonas aeruginosa (strain ATCC 15692 / DSM 22644 / CIP 104116 / JCM 14847 / LMG 12228 / 1C / PRS 101 / PAO1)).